A 130-amino-acid polypeptide reads, in one-letter code: Methylglyoxal synthase (130 aa).

The 130-residue stretch at 1-130 (MSKPRIALIA…DLARNMQDVC (130 aa)) folds into the MGS-like domain. Substrate is bound by residues H11, K15, 37 to 40 (TGTT), and 57 to 58 (SG). The active-site Proton donor/acceptor is D63. H90 contributes to the substrate binding site.

Belongs to the methylglyoxal synthase family.

It carries out the reaction dihydroxyacetone phosphate = methylglyoxal + phosphate. Functionally, catalyzes the formation of methylglyoxal from dihydroxyacetone phosphate. The protein is Methylglyoxal synthase of Burkholderia vietnamiensis (strain G4 / LMG 22486) (Burkholderia cepacia (strain R1808)).